The chain runs to 356 residues: Probable D-xylulose reductase A (356 aa).

Positions 45, 70, and 71 each coordinate Zn(2+). NAD(+) is bound at residue 180-185 (GAGPVG).

Belongs to the zinc-containing alcohol dehydrogenase family. Zn(2+) serves as cofactor.

The catalysed reaction is xylitol + NAD(+) = D-xylulose + NADH + H(+). Its pathway is carbohydrate degradation; L-arabinose degradation via L-arabinitol; D-xylulose 5-phosphate from L-arabinose (fungal route): step 4/5. Its function is as follows. Xylitol dehydrogenase which catalyzes the conversion of xylitol to D-xylulose. Xylose is a major component of hemicelluloses such as xylan. Most fungi utilize D-xylose via three enzymatic reactions, xylose reductase (XR), xylitol dehydrogenase (XDH), and xylulokinase, to form xylulose 5-phosphate, which enters pentose phosphate pathway. This chain is Probable D-xylulose reductase A (xdhA), found in Arthroderma otae (strain ATCC MYA-4605 / CBS 113480) (Microsporum canis).